Reading from the N-terminus, the 257-residue chain is Imidazole glycerol phosphate synthase subunit HisF (257 aa).

Catalysis depends on residues Asp11 and Asp130.

Belongs to the HisA/HisF family. As to quaternary structure, heterodimer of HisH and HisF.

It is found in the cytoplasm. The enzyme catalyses 5-[(5-phospho-1-deoxy-D-ribulos-1-ylimino)methylamino]-1-(5-phospho-beta-D-ribosyl)imidazole-4-carboxamide + L-glutamine = D-erythro-1-(imidazol-4-yl)glycerol 3-phosphate + 5-amino-1-(5-phospho-beta-D-ribosyl)imidazole-4-carboxamide + L-glutamate + H(+). The protein operates within amino-acid biosynthesis; L-histidine biosynthesis; L-histidine from 5-phospho-alpha-D-ribose 1-diphosphate: step 5/9. Functionally, IGPS catalyzes the conversion of PRFAR and glutamine to IGP, AICAR and glutamate. The HisF subunit catalyzes the cyclization activity that produces IGP and AICAR from PRFAR using the ammonia provided by the HisH subunit. In Shewanella denitrificans (strain OS217 / ATCC BAA-1090 / DSM 15013), this protein is Imidazole glycerol phosphate synthase subunit HisF.